We begin with the raw amino-acid sequence, 147 residues long: Ubiquitin-conjugating enzyme E2-16 kDa (147 aa).

Residues 1–147 enclose the UBC core domain; it reads MAFKRINKEL…AREWTRKYAI (147 aa). Cysteine 107 serves as the catalytic Glycyl thioester intermediate.

Belongs to the ubiquitin-conjugating enzyme family.

The catalysed reaction is S-ubiquitinyl-[E1 ubiquitin-activating enzyme]-L-cysteine + [E2 ubiquitin-conjugating enzyme]-L-cysteine = [E1 ubiquitin-activating enzyme]-L-cysteine + S-ubiquitinyl-[E2 ubiquitin-conjugating enzyme]-L-cysteine.. It participates in protein modification; protein ubiquitination. In terms of biological role, catalyzes the covalent attachment of ubiquitin to other proteins. May also mediate selective proteolysis pathways. The chain is Ubiquitin-conjugating enzyme E2-16 kDa (UBC1) from Colletotrichum gloeosporioides (Anthracnose fungus).